Reading from the N-terminus, the 499-residue chain is Putative alpha-galactosidase 8 (499 aa).

N-linked (GlcNAc...) asparagine glycosylation is found at N154 and N191. D238 (nucleophile) is an active-site residue. Residue N256 is glycosylated (N-linked (GlcNAc...) asparagine). D303 serves as the catalytic Proton donor.

The protein belongs to the glycosyl hydrolase 27 family.

It localises to the secreted. It carries out the reaction Hydrolysis of terminal, non-reducing alpha-D-galactose residues in alpha-D-galactosides, including galactose oligosaccharides, galactomannans and galactolipids.. Its function is as follows. Putative alpha-galactosidase involved in the degradation of simple oligosaccharides like melibiose, raffinose and stachyose, and of polymeric galacto(gluco)mannans. The chain is Putative alpha-galactosidase 8 (agl8) from Emericella nidulans (strain FGSC A4 / ATCC 38163 / CBS 112.46 / NRRL 194 / M139) (Aspergillus nidulans).